A 602-amino-acid polypeptide reads, in one-letter code: Elongation factor 4 (602 aa).

The tr-type G domain maps to 7–189 (DKIRNFSIVA…AIVTRLPPPK (183 aa)). Residues 19-24 (DHGKST) and 136-139 (NKVD) contribute to the GTP site.

This sequence belongs to the TRAFAC class translation factor GTPase superfamily. Classic translation factor GTPase family. LepA subfamily.

It localises to the cell inner membrane. The enzyme catalyses GTP + H2O = GDP + phosphate + H(+). Its function is as follows. Required for accurate and efficient protein synthesis under certain stress conditions. May act as a fidelity factor of the translation reaction, by catalyzing a one-codon backward translocation of tRNAs on improperly translocated ribosomes. Back-translocation proceeds from a post-translocation (POST) complex to a pre-translocation (PRE) complex, thus giving elongation factor G a second chance to translocate the tRNAs correctly. Binds to ribosomes in a GTP-dependent manner. The chain is Elongation factor 4 from Caulobacter vibrioides (strain NA1000 / CB15N) (Caulobacter crescentus).